We begin with the raw amino-acid sequence, 135 residues long: Meiotically up-regulated gene 116 protein (135 aa).

The helical transmembrane segment at Tyr20–Val39 threads the bilayer. Positions Gln81–Glu101 are disordered. The segment covering Lys86–Lys98 has biased composition (basic residues).

It is found in the mitochondrion membrane. Its function is as follows. Has a role in meiosis. This is Meiotically up-regulated gene 116 protein (mug116) from Schizosaccharomyces pombe (strain 972 / ATCC 24843) (Fission yeast).